Reading from the N-terminus, the 284-residue chain is Protein SIC1 (284 aa).

The disordered stretch occupies residues Met-1 to Arg-89. The residue at position 5 (Thr-5) is a Phosphothreonine; by PHO85. Composition is skewed to polar residues over residues Pro-18 to Phe-52 and Pro-61 to Arg-79. At Thr-33 the chain carries Phosphothreonine. Ser-76 is subject to Phosphoserine. The residue at position 173 (Thr-173) is a Phosphothreonine. Residues Ser-198 and Ser-201 each carry the phosphoserine modification. Residues Lys-268, Lys-272, and Lys-274 each carry the lysine derivative modification.

In terms of assembly, interacts with HOG1. Phosphorylated by cyclin-dependent kinases CDC28 and PHO85 in association with G1-cyclins, promoting degradation of SIC1 and exit form G1. In terms of processing, may contain a covalently attached chromophore. Post-translationally, the N-terminus is blocked.

The protein localises to the cytoplasm. It is found in the nucleus. Functionally, substrate and inhibitor of the cyclin-dependent protein kinase CDC28. Its activity could be important for faithful segregation of chromosomes to daughter cells. It acts in response to a signal from a post-start checkpoint. The chain is Protein SIC1 (SIC1) from Saccharomyces cerevisiae (strain ATCC 204508 / S288c) (Baker's yeast).